The following is a 359-amino-acid chain: Protein Wnt-5b (359 aa).

The N-terminal stretch at 1-17 is a signal peptide; sequence MPSLLLLFTAALLSSWA. A disulfide bridge connects residues Cys83 and Cys94. Residues Asn93 and Asn99 are each glycosylated (N-linked (GlcNAc...) asparagine). Intrachain disulfides connect Cys133-Cys141, Cys143-Cys161, Cys217-Cys231, Cys219-Cys226, Cys288-Cys319, Cys304-Cys314, Cys318-Cys358, Cys334-Cys349, Cys336-Cys346, and Cys341-Cys342. Residue Ser223 is the site of O-palmitoleoyl serine; by PORCN attachment. N-linked (GlcNAc...) asparagine glycosylation is found at Asn291 and Asn305.

This sequence belongs to the Wnt family. In terms of assembly, interacts with PORCN. Post-translationally, palmitoleoylation is required for efficient binding to frizzled receptors. Depalmitoleoylation leads to Wnt signaling pathway inhibition.

It localises to the secreted. Its subcellular location is the extracellular space. It is found in the extracellular matrix. In terms of biological role, ligand for members of the frizzled family of seven transmembrane receptors. Probable developmental protein. May be a signaling molecule which affects the development of discrete regions of tissues. Is likely to signal over only few cell diameters. The chain is Protein Wnt-5b (WNT5B) from Pongo abelii (Sumatran orangutan).